Here is a 424-residue protein sequence, read N- to C-terminus: Histidine--tRNA ligase (424 aa).

The protein belongs to the class-II aminoacyl-tRNA synthetase family. As to quaternary structure, homodimer.

Its subcellular location is the cytoplasm. The catalysed reaction is tRNA(His) + L-histidine + ATP = L-histidyl-tRNA(His) + AMP + diphosphate + H(+). In Shewanella piezotolerans (strain WP3 / JCM 13877), this protein is Histidine--tRNA ligase.